The chain runs to 1149 residues: Potassium channel subfamily U member 1 (1149 aa).

Over 1–24 (MFQTKLRNETWEDLPKMSCTTEIQ) the chain is Extracellular. Residues 25–45 (AAFILSSFVTFFSGLIILLIF) traverse the membrane as a helical segment. The Cytoplasmic portion of the chain corresponds to 46–101 (RLIWRSVKKWQIIKGTGIILELFTSGTIARSHVRSLHFQGQFRDHIEMLLSAQTFV). A helical membrane pass occupies residues 102–122 (GQVLVILVFVLSIGSLIIYFI). Over 123–138 (NSADPVGSCSSYEDKT) the chain is Extracellular. Residues 139-159 (IPIDLVFNAFFSFYFGLRFMA) form a helical membrane-spanning segment. Residues 160–163 (ADDK) are Cytoplasmic-facing. The chain crosses the membrane as a helical span at residues 164 to 184 (IKFWLEMNSIVDIFTIPPTFI). Residues 185-188 (SYYL) are Extracellular-facing. Residues 189-209 (KSNWLGLRFLRALRLLELPQI) form a helical; Voltage-sensor membrane-spanning segment. Residues 210–226 (LQILRAIKTSNSVKFSK) are Cytoplasmic-facing. A helical transmembrane segment spans residues 227–247 (LLSIILSTWFTAAGFIHLVEN). Residues 248–259 (SGDPWLKGRNSQ) lie on the Extracellular side of the membrane. An intramembrane region (pore-forming) is located at residues 260 to 282 (NISYFESIYLVMATTSTVGFGDV). A Selectivity for potassium motif is present at residues 276–279 (TVGF). The Extracellular portion of the chain corresponds to 283-291 (VAKTSLGRT). A helical transmembrane segment spans residues 292 to 312 (FIMFFTLGSLILFANYIPEMV). Residues 313–1149 (ELFANKRKYT…EDPFAYSEPL (837 aa)) are Cytoplasmic-facing. RCK N-terminal domains are found at residues 331-473 (KKFI…DNII) and 713-884 (RNHI…EGSL). 2 disordered regions span residues 828–854 (QIDS…NEKS) and 1118–1149 (SQIP…SEPL). The segment covering 830-840 (DSSSDPSPSVS) has biased composition (low complexity). A compositionally biased stretch (basic and acidic residues) spans 1125–1135 (NAKENERKTSD).

The protein belongs to the potassium channel family. Calcium-activated (TC 1.A.1.3) subfamily. KCa5.1/KCNU1 sub-subfamily. As to quaternary structure, homotetramer; which constitutes the activated potassium channel. Interacts with LRRC52; this interaction changes channel gating properties, such as shifting gating to more negative potentials at a given pH. Testis-specific.

It is found in the cell membrane. The protein localises to the cell projection. The protein resides in the cilium. Its subcellular location is the flagellum membrane. The catalysed reaction is K(+)(in) = K(+)(out). Its activity is regulated as follows. Regulated by changes in cytosolic pH; activated by alkalization. Activated by intracellular Ca(2+). Despite strong sequence similarity, human KCNU1 channels are significantly more sensitive to activation by internal Ca(2+) and less pH-sensitive than mouse KCNU1. VU0546110 acts as a selective inhibitor. The auxiliary subunit LRRC52 shifts the activation of KCNU1 to more negative potentials at a given pH. Functionally, testis-specific potassium channel activated by both intracellular pH and membrane voltage that mediates export of K(+). Represents the primary spermatozoan K(+) current. The channel underlies a pH-triggered membrane hyperpolarization during the process of sperm capacitation, as sperm encounter the alkaline environment near the ovum in the female reproductive tract, thereby playing an essential for male fertility. In Homo sapiens (Human), this protein is Potassium channel subfamily U member 1.